The following is a 361-amino-acid chain: Phosphoserine aminotransferase (361 aa).

2 residues coordinate L-glutamate: Ser-9 and Arg-42. Pyridoxal 5'-phosphate contacts are provided by residues 76–77 (AR), Trp-103, Thr-153, Asp-173, and Gln-196. Lys-197 carries the N6-(pyridoxal phosphate)lysine modification. 238-239 (NT) contributes to the pyridoxal 5'-phosphate binding site.

This sequence belongs to the class-V pyridoxal-phosphate-dependent aminotransferase family. SerC subfamily. Homodimer. It depends on pyridoxal 5'-phosphate as a cofactor.

The protein localises to the cytoplasm. The enzyme catalyses O-phospho-L-serine + 2-oxoglutarate = 3-phosphooxypyruvate + L-glutamate. It carries out the reaction 4-(phosphooxy)-L-threonine + 2-oxoglutarate = (R)-3-hydroxy-2-oxo-4-phosphooxybutanoate + L-glutamate. It functions in the pathway amino-acid biosynthesis; L-serine biosynthesis; L-serine from 3-phospho-D-glycerate: step 2/3. It participates in cofactor biosynthesis; pyridoxine 5'-phosphate biosynthesis; pyridoxine 5'-phosphate from D-erythrose 4-phosphate: step 3/5. Catalyzes the reversible conversion of 3-phosphohydroxypyruvate to phosphoserine and of 3-hydroxy-2-oxo-4-phosphonooxybutanoate to phosphohydroxythreonine. In Wigglesworthia glossinidia brevipalpis, this protein is Phosphoserine aminotransferase.